Here is a 521-residue protein sequence, read N- to C-terminus: Cytochrome b5 reductase 4 (521 aa).

M1 is modified (N-acetylmethionine). The span at 1 to 18 (MLNVPSQSFPAPRSQQRV) shows a compositional bias: polar residues. The tract at residues 1–27 (MLNVPSQSFPAPRSQQRVASGGRSKVP) is disordered. Residues 54 to 130 (LIEVTEEELK…LKECLVGRMA (77 aa)) form the Cytochrome b5 heme-binding domain. H89 and H112 together coordinate heme. The CS domain occupies 165-256 (PSYPSYDWFQ…KENTSWDFLG (92 aa)). An FAD-binding FR-type domain is found at 273-385 (LYYRKCQLIS…SSPEGNFKIS (113 aa)). FAD contacts are provided by residues 365-380 (DRLQ…SPEG) and 392-424 (DLFL…KVKL).

The protein belongs to the flavoprotein pyridine nucleotide cytochrome reductase family. The cofactor is FAD. Widely expressed.

It localises to the endoplasmic reticulum. The catalysed reaction is 2 Fe(III)-[cytochrome b5] + NADH = 2 Fe(II)-[cytochrome b5] + NAD(+) + H(+). Functionally, NADH-cytochrome b5 reductase involved in endoplasmic reticulum stress response pathway. Plays a critical role in protecting pancreatic beta-cells against oxidant stress, possibly by protecting the cell from excess buildup of reactive oxygen species (ROS). Reduces a variety of substrates in vitro, such as cytochrome c, feericyanide and methemoglobin. This chain is Cytochrome b5 reductase 4, found in Homo sapiens (Human).